The chain runs to 2527 residues: Neurogenic locus notch homolog protein 1 (2527 aa).

A signal peptide spans 1 to 36 (MGRSDSRAGALLEGGCEQNIDPRRAAHCHHPRLATS). Residues 37–1741 (SLRCSQPSGT…VEPPLPSQLH (1705 aa)) lie on the Extracellular side of the membrane. 33 disulfides stabilise this stretch: Cys-40-Cys-53, Cys-47-Cys-62, Cys-64-Cys-73, Cys-79-Cys-90, Cys-84-Cys-103, Cys-105-Cys-114, Cys-122-Cys-133, Cys-127-Cys-143, Cys-145-Cys-154, Cys-160-Cys-171, Cys-165-Cys-180, Cys-182-Cys-191, Cys-198-Cys-211, Cys-205-Cys-220, Cys-222-Cys-231, Cys-238-Cys-249, Cys-243-Cys-259, Cys-261-Cys-270, Cys-277-Cys-288, Cys-282-Cys-297, Cys-299-Cys-308, Cys-315-Cys-328, Cys-322-Cys-337, Cys-339-Cys-348, Cys-355-Cys-366, Cys-360-Cys-375, Cys-377-Cys-386, Cys-392-Cys-403, Cys-397-Cys-414, Cys-416-Cys-425, Cys-432-Cys-445, Cys-439-Cys-454, and Cys-456-Cys-465. N-linked (GlcNAc...) asparagine glycosylation is present at Asn-57. EGF-like domains follow at residues 75-115 (DPNP…PLCL), 118-155 (LDNA…KSCQ), and 156-192 (QADP…PTCR). An O-linked (Glc...) serine glycan is attached at Ser-81. The O-linked (Fuc...) threonine glycan is linked to Thr-89. The O-linked (Fuc...) threonine glycan is linked to Thr-132. Ser-162 is a glycosylation site (O-linked (Glc...) serine). One can recognise an EGF-like 4; calcium-binding domain in the interval 194 to 232 (DVNECSQNPGLCRHGGTCHNEIGSYRCVCRATHTGPHCE). A glycan (O-linked (Fuc...) threonine) is linked at Thr-210. Positions 234-271 (PYVPCSPSPCQNGGTCRPTGDTTHECACLPGFAGQNCE) constitute an EGF-like 5 domain. An O-linked (Fuc...) threonine; alternate glycan is attached at Thr-248. An O-linked (GalNAc...) threonine; alternate glycan is attached at Thr-248. In terms of domain architecture, EGF-like 6; calcium-binding spans 273–309 (NVDDCPGNNCKNGGACVDGVNTYNCRCPPEWTGQYCT). Residues 311 to 349 (DVDECQLMPNACQNGGTCHNTHGGYNCVCVNGWTGEDCS) form the EGF-like 7; calcium-binding domain. Residue Thr-327 is glycosylated (O-linked (Fuc...) threonine). One can recognise an EGF-like 8; calcium-binding domain in the interval 351–387 (NIDDCASAACFQGATCHDRVASFYCECPHGRTGLLCH). O-linked (Glc...) serine glycosylation occurs at Ser-357. O-linked (Fuc...) threonine glycosylation occurs at Thr-365. The region spanning 388–426 (LNDACISNPCNEGSNCDTNPVNGKAICTCPSGYTGPACS) is the EGF-like 9 domain. Ser-394 carries O-linked (Glc...) serine glycosylation. Positions 428–466 (DVDECALGANPCEHAGKCLNTLGSFECQCLQGYTGPRCE) constitute an EGF-like 10; calcium-binding domain. Residues 436–437 (AN) form an interaction with DLL4 region. 2 residues coordinate Ca(2+): Thr-448 and Ser-451. The O-linked (Glc...) serine glycan is linked to Ser-451. The segment at 464–468 (RCEID) is interaction with DLL4. Ca(2+)-binding residues include Asp-468, Val-469, and Glu-471. In terms of domain architecture, EGF-like 11; calcium-binding spans 468–504 (DVNECISNPCQNDATCLDQIGEFQCICMPGYEGVYCE). 3 disulfides stabilise this stretch: Cys-472–Cys-483, Cys-477–Cys-492, and Cys-494–Cys-503. Residue Ser-474 is glycosylated (O-linked (Glc...) serine). Thr-482 carries an O-linked (Fuc...) threonine glycan. Asp-485 and Gln-486 together coordinate Ca(2+). Asn-506, Thr-507, and Glu-509 together coordinate Ca(2+). Residues 506 to 542 (NTDECASSPCLHNGHCMDKINEFLCQCPKGFSGHLCQ) form the EGF-like 12; calcium-binding domain. Intrachain disulfides connect Cys-510-Cys-521, Cys-515-Cys-530, Cys-532-Cys-541, Cys-548-Cys-559, Cys-553-Cys-568, Cys-570-Cys-579, Cys-586-Cys-596, Cys-591-Cys-605, Cys-607-Cys-616, Cys-623-Cys-634, Cys-628-Cys-643, Cys-645-Cys-654, Cys-661-Cys-671, Cys-666-Cys-680, Cys-682-Cys-691, Cys-698-Cys-709, Cys-703-Cys-718, Cys-720-Cys-729, Cys-736-Cys-746, Cys-741-Cys-755, Cys-757-Cys-766, Cys-773-Cys-784, Cys-778-Cys-793, Cys-795-Cys-804, Cys-811-Cys-822, Cys-816-Cys-831, Cys-833-Cys-842, and Cys-849-Cys-860. O-linked (Glc...) serine glycosylation occurs at Ser-512. The Ca(2+) site is built by Asp-523 and Lys-524. Residues 544-580 (DVDECASTPCKNGAKCLDGPNTYTCVCTEGYTGTHCE) enclose the EGF-like 13; calcium-binding domain. Ser-550 carries O-linked (Glc...) serine glycosylation. The EGF-like 14; calcium-binding domain maps to 582–617 (DIDECDPDPCHYGFCKDGVATFTCLCQPGYTGHHCE). The EGF-like 15; calcium-binding domain maps to 619–655 (NINECHSQPCRHGGTCQDRDNSYLCLCLKGTTGPNCE). O-linked (Glc...) serine glycosylation occurs at Ser-625. O-linked (Fuc...) threonine glycosylation is present at Thr-633. An EGF-like 16; calcium-binding domain is found at 657–692 (NLDDCASNPCDSGTCLDKIDGYECACEPGYTGSMCN). A glycan (O-linked (Glc...) serine) is linked at Ser-663. The 37-residue stretch at 694–730 (NIDECAGSPCHNGGTCEDGIAGFTCRCPEGYHDPTCL) folds into the EGF-like 17; calcium-binding domain. Residue Thr-708 is glycosylated (O-linked (Fuc...) threonine). The EGF-like 18; calcium-binding domain occupies 732–767 (EVNECNSNPCIHGACRDGLNGYKCDCAPGWSGTNCD). Ser-738 carries an O-linked (Glc...) serine glycan. Residues 769-805 (NNNECESNPCVNGGTCKDMTSGYVCTCREGFSGPNCQ) form the EGF-like 19 domain. Residue Ser-775 is glycosylated (O-linked (Glc...) serine). O-linked (Fuc...) threonine glycosylation is present at Thr-783. A glycan (O-linked (GlcNAc) serine) is linked at Ser-800. The region spanning 807 to 843 (NINECASNPCLNQGTCIDDVAGYKCNCPLPYTGATCE) is the EGF-like 20; calcium-binding domain. Ser-813 carries an O-linked (Glc...) serine glycan. O-linked (Fuc...) threonine glycosylation occurs at Thr-821. In terms of domain architecture, EGF-like 21 spans 845–883 (VLAPCATSPCKNSGVCKESEDYESFSCVCPTGWQGQTCE). Positions 885-921 (DINECVKSPCRHGASCQNTNGSYRCLCQAGYTGRNCE) constitute an EGF-like 22; calcium-binding domain. The N-linked (GlcNAc...) asparagine glycan is linked to Asn-904. Thr-916 carries O-linked (GlcNAc) threonine glycosylation. Positions 923-959 (DIDDCRPNPCHNGGSCTDGINMAFCDCLPGFQGAFCE) constitute an EGF-like 23 domain. Residue Ser-937 is glycosylated (O-linked (Fuc) serine). Positions 961–997 (DINECASNPCRNGANCTDCVDSYTCTCPAGFNGIHCE) constitute an EGF-like 24; calcium-binding domain. O-linked (Glc...) serine glycosylation occurs at Ser-967. Residue Asn-975 is glycosylated (N-linked (GlcNAc...) asparagine). EGF-like domains lie at 999–1035 (NTPD…SYCQ), 1037–1073 (DVNE…LNCQ), 1075–1111 (LVHW…FNCD), 1113–1159 (LSVS…SYCE), and 1161–1197 (EVDE…SNCS). Thr-1013 carries an O-linked (Fuc...) threonine glycan. O-linked (Glc...) serine glycosylation is present at Ser-1043. Thr-1051 carries an O-linked (Fuc...) threonine glycan. Residue Ser-1081 is glycosylated (O-linked (Glc...) serine). Cys-1117 and Cys-1138 are oxidised to a cystine. O-linked (Fuc...) threonine glycosylation is present at Thr-1175. Residue Asn-1195 is glycosylated (N-linked (GlcNAc...) asparagine). An EGF-like 30; calcium-binding domain is found at 1199-1235 (EINECLSQPCQNGGTCIDLTNTYKCSCPRGTQGVHCE). O-linked (Glc...) serine glycosylation is present at Ser-1205. Thr-1213 carries an O-linked (Fuc...) threonine glycan. The EGF-like 31; calcium-binding domain occupies 1237–1281 (NVDDCHPHLDPASRSPKCFNNGTCVDQVGGYSCTCPPGFVGERCE). Asn-1257 carries an N-linked (GlcNAc...) asparagine glycan. EGF-like domains are found at residues 1283–1321 (DINE…RRCE), 1323–1362 (VING…ATCE), 1364–1400 (DART…PECQ), and 1403–1442 (ASSP…LLCH). Residue Ser-1289 is glycosylated (O-linked (Glc...) serine). Residue Thr-1378 is glycosylated (O-linked (Fuc...) threonine). O-linked (GlcNAc...) threonine glycosylation occurs at Thr-1395. Thr-1418 carries O-linked (Fuc...) threonine; alternate glycosylation. Thr-1418 carries O-linked (GalNAc...) threonine; alternate glycosylation. LNR repeat units lie at residues 1465 to 1505 (CELP…PWKN), 1506 to 1547 (CTQS…CNPL), and 1548 to 1587 (YDQY…RLAA). Positions 1473, 1476, 1491, and 1494 each coordinate Ca(2+). Asn-1505 carries an N-linked (GlcNAc...) asparagine glycan. Asn-1603 carries an N-linked (GlcNAc...) asparagine glycan. Residue Thr-1731 is glycosylated (O-linked (GalNAc...) threonine). Residues 1734–1766 (PPLPSQLHLMYLAAAAFVLLFFVGCGVLLSRKR) form an interaction with PSEN1 region. A helical transmembrane segment spans residues 1742-1762 (LMYLAAAAFVLLFFVGCGVLL). Over 1763–2527 (SRKRRRQHGQ…QITHIPEAFK (765 aa)) the chain is Cytoplasmic. Lys-1765 participates in a covalent cross-link: Glycyl lysine isopeptide (Lys-Gly) (interchain with G-Cter in ubiquitin). A disordered region spans residues 1786–1814 (KKKRREPLGEDSVGLKPLKNASDGALMDD). A Phosphothreonine modification is found at Thr-1867. ANK repeat units follow at residues 1933–1962 (TGET…DANI), 1966–1996 (MGRT…DLDA), 2000–2029 (DGTT…DVNA), 2033–2062 (LGKS…NKDM), and 2066–2095 (KEET…NRDI). Residues 1953–1961 (LLEASADAN) form an HIF1AN-binding region. Asn-1961 is subject to (3S)-3-hydroxyasparagine; by HIF1AN; partial. The interval 2020 to 2028 (LINSHADVN) is HIF1AN-binding. A (3S)-3-hydroxyasparagine; by HIF1AN modification is found at Asn-2028. 3 disordered regions span residues 2157 to 2201 (SATQ…DSSS), 2378 to 2424 (QPQN…SLPV), and 2436 to 2527 (PTSL…EAFK). The span at 2378–2391 (QPQNLQPPSQPHLS) shows a compositional bias: low complexity. A compositionally biased stretch (polar residues) spans 2436–2474 (PTSLPSSMVPPMTTTQFLTPPSQHSYSSSPVDNTPSHQL). The segment covering 2484–2499 (PSPESPDQWSSSSPHS) has biased composition (low complexity). Residues 2500–2520 (NISDWSEGISSPPTSMPSQIT) are compositionally biased toward polar residues.

The protein belongs to the NOTCH family. As to quaternary structure, heterodimer of a C-terminal fragment N(TM) and an N-terminal fragment N(EC) which are probably linked by disulfide bonds. Interacts with DNER, DTX1, DTX2 and RBPJ/RBPSUH. Also interacts with MAML1, MAML2 and MAML3 which act as transcriptional coactivators for NOTCH1. Notch 1 intracellular domain interacts with SNW1; the interaction involves multimerized NOTCH1 NICD and is implicated in a formation of an intermediate preactivation complex which associates with DNA-bound CBF-1/RBPJ. The activated membrane-bound form interacts with AAK1 which promotes NOTCH1 stabilization. Forms a trimeric complex with FBXW7 and SGK1. Interacts with HIF1AN. HIF1AN negatively regulates the function of notch intracellular domain (NICD), accelerating myogenic differentiation. Interacts (via NICD) with SNAI1 (via zinc fingers); the interaction induces SNAI1 degradation via MDM2-mediated ubiquitination and inhibits SNAI1-induced cell invasion. Interacts (via NICD) with MDM2A. Interacts (via NICD) with BCL6; the interaction decreases MAML1 recruitment by NOTCH1 NICD on target genes DNA and inhibits NOTCH1 transactivation activity. Interacts with THBS4. Interacts (via the EGF-like repeat region) with CCN3 (via CTCK domain). Interacts (via EGF-like domains) with DLL4 (via N-terminal DSL and MNNL domains). Interacts with ZMIZ1. Interacts (via NICD domain) with MEGF10 (via the cytoplasmic domain). Interacts with DLL1 and JAG1. Interacts (via NICD domain) with PRAG1. Forms a complex with PRAG1, N1ICD and MAML1, in a MAML1-dependent manner. Interacts (via transmembrane region) with PSEN1; the interaction is direct. Interacts with ZFP64. Post-translationally, synthesized in the endoplasmic reticulum as an inactive form which is proteolytically cleaved by a furin-like convertase in the trans-Golgi network before it reaches the plasma membrane to yield an active, ligand-accessible form. Cleavage results in a C-terminal fragment N(TM) and a N-terminal fragment N(EC). Following ligand binding, it is cleaved by ADAM17 to yield a membrane-associated intermediate fragment called notch extracellular truncation (NEXT). Following endocytosis, this fragment is then cleaved by one of the catalytic subunits of gamma-secretase (PSEN1 or PSEN2) to release a Notch-derived peptide containing the intracellular domain (NICD) from the membrane. Phosphorylated. In terms of processing, O-linked glycosylation by GALNT11 is involved in determination of left/right symmetry: glycosylation promotes activation of NOTCH1, possibly by promoting cleavage by ADAM17, modulating the balance between motile and immotile (sensory) cilia at the left-right organiser (LRO). O-glycosylated on the EGF-like domains. O-glucosylated at Ser-451 by KDELC1 and KDELC2. Contains both O-linked fucose and O-linked glucose in the EGF-like domains 11, 12 and 13, which are interacting with the residues on DLL4. MFNG-, RFNG- and LFNG-mediated modification of O-fucose residues at specific EGF-like domains results in inhibition of its activation by JAG1 and enhancement of its activation by DLL1 via an increased binding to DLL1. Post-translationally, ubiquitinated. Undergoes 'Lys-29'-linked polyubiquitination by ITCH; promotes the lysosomal degradation of non-activated internalized NOTCH1. Deubiquitination by USP12 is required for transport of internalized non-activated receptor from late endosomes to lysosomes for degradation. Monoubiquitination at Lys-1765 is required for activation by gamma-secretase cleavage, it promotes interaction with AAK1, which stabilizes it. Deubiquitination by EIF3F is necessary for nuclear import of activated Notch. Hydroxylated at Asn-1961 by HIF1AN. Hydroxylated at Asn-2028 by HIF1AN. Hydroxylation reduces affinity for HI1AN and may thus indirectly modulate negative regulation of NICD.

Its subcellular location is the cell membrane. The protein localises to the late endosome membrane. It localises to the nucleus. Functionally, functions as a receptor for membrane-bound ligands Jagged-1 (JAG1), Jagged-2 (JAG2) and Delta-1 (DLL1) to regulate cell-fate determination. Upon ligand activation through the released notch intracellular domain (NICD) it forms a transcriptional activator complex with RBPJ/RBPSUH and activates genes of the enhancer of split locus. Affects the implementation of differentiation, proliferation and apoptotic programs. Involved in angiogenesis; negatively regulates endothelial cell proliferation and migration and angiogenic sprouting. Involved in the maturation of both CD4(+) and CD8(+) cells in the thymus. Important for follicular differentiation and possibly cell fate selection within the follicle. During cerebellar development, functions as a receptor for neuronal DNER and is involved in the differentiation of Bergmann glia. Represses neuronal and myogenic differentiation. May play an essential role in postimplantation development, probably in some aspect of cell specification and/or differentiation. May be involved in mesoderm development, somite formation and neurogenesis. May enhance HIF1A function by sequestering HIF1AN away from HIF1A. Required for the THBS4 function in regulating protective astrogenesis from the subventricular zone (SVZ) niche after injury. Involved in determination of left/right symmetry by modulating the balance between motile and immotile (sensory) cilia at the left-right organiser (LRO). This is Neurogenic locus notch homolog protein 1 (NOTCH1) from Cricetulus griseus (Chinese hamster).